The following is an 813-amino-acid chain: Acyl-homoserine lactone acylase QuiP (813 aa).

Positions 1–26 (MAAPAFPPFRLRFATAATLLGMLGLA) are cleaved as a signal peptide. S262 serves as the catalytic Nucleophile.

This sequence belongs to the peptidase S45 family. In terms of assembly, heterodimer of an alpha subunit and a beta subunit processed from the same precursor.

Its subcellular location is the periplasm. It carries out the reaction an N-acyl-L-homoserine lactone + H2O = L-homoserine lactone + a carboxylate. Catalyzes the deacylation of acyl-homoserine lactone (AHL or acyl-HSL), releasing homoserine lactone (HSL) and the corresponding fatty acid. Possesses a specificity for the degradation of long-chain acyl-HSLs (side chains of seven or more carbons in length). The protein is Acyl-homoserine lactone acylase QuiP (quiP) of Pseudomonas putida (strain ATCC 47054 / DSM 6125 / CFBP 8728 / NCIMB 11950 / KT2440).